Here is a 464-residue protein sequence, read N- to C-terminus: Glutamate decarboxylase (464 aa).

At K274 the chain carries N6-(pyridoxal phosphate)lysine.

The protein belongs to the group II decarboxylase family. Requires pyridoxal 5'-phosphate as cofactor.

The enzyme catalyses L-glutamate + H(+) = 4-aminobutanoate + CO2. In terms of biological role, catalyzes the pyridoxal-dependent decarboxylation of glutamate to produce 4-aminobutanoate. Has weak activity with aspartate, but cannot complement an E.coli panD deletion mutant. The sequence is that of Glutamate decarboxylase from Aliivibrio fischeri (strain ATCC 700601 / ES114) (Vibrio fischeri).